Reading from the N-terminus, the 61-residue chain is MPNILSLTCICFNSVIYPTSFFFAKLPEAYAIFNPIVDFMPVIPLFFFLLAFVWQAAVSFR.

Residues 1 to 24 (MPNILSLTCICFNSVIYPTSFFFA) constitute a propeptide that is removed on maturation. Residues 32–52 (IFNPIVDFMPVIPLFFFLLAF) form a helical membrane-spanning segment.

This sequence belongs to the PsbK family. PSII is composed of 1 copy each of membrane proteins PsbA, PsbB, PsbC, PsbD, PsbE, PsbF, PsbH, PsbI, PsbJ, PsbK, PsbL, PsbM, PsbT, PsbX, PsbY, PsbZ, Psb30/Ycf12, at least 3 peripheral proteins of the oxygen-evolving complex and a large number of cofactors. It forms dimeric complexes.

The protein localises to the plastid. Its subcellular location is the chloroplast thylakoid membrane. In terms of biological role, one of the components of the core complex of photosystem II (PSII). PSII is a light-driven water:plastoquinone oxidoreductase that uses light energy to abstract electrons from H(2)O, generating O(2) and a proton gradient subsequently used for ATP formation. It consists of a core antenna complex that captures photons, and an electron transfer chain that converts photonic excitation into a charge separation. The protein is Photosystem II reaction center protein K of Triticum aestivum (Wheat).